The primary structure comprises 135 residues: Large ribosomal subunit protein uL16c (135 aa).

Over residues 1-17 (MLSPKRTRFRKQHRGRM) the composition is skewed to basic residues. The disordered stretch occupies residues 1–20 (MLSPKRTRFRKQHRGRMKGT).

This sequence belongs to the universal ribosomal protein uL16 family. As to quaternary structure, part of the 50S ribosomal subunit.

The protein localises to the plastid. The protein resides in the chloroplast. In Lemna minor (Common duckweed), this protein is Large ribosomal subunit protein uL16c.